The primary structure comprises 290 residues: 33 kDa chaperonin (290 aa).

Cystine bridges form between cysteine 234–cysteine 236 and cysteine 267–cysteine 270.

Belongs to the HSP33 family. Post-translationally, under oxidizing conditions two disulfide bonds are formed involving the reactive cysteines. Under reducing conditions zinc is bound to the reactive cysteines and the protein is inactive.

It is found in the cytoplasm. In terms of biological role, redox regulated molecular chaperone. Protects both thermally unfolding and oxidatively damaged proteins from irreversible aggregation. Plays an important role in the bacterial defense system toward oxidative stress. This chain is 33 kDa chaperonin, found in Colwellia psychrerythraea (strain 34H / ATCC BAA-681) (Vibrio psychroerythus).